The sequence spans 217 residues: Mucosal pentraxin (217 aa).

A signal peptide spans Met-1–Thr-19. Residues Arg-24–Leu-217 form the Pentraxin (PTX) domain. Residues Cys-55 and Cys-114 are joined by a disulfide bond. Ca(2+) is bound by residues Asp-77, Asn-78, Glu-155, Gln-156, Asp-157, and Gln-167.

Belongs to the pentraxin family. Homopentamer. Pentraxin (or pentaxin) have a discoid arrangement of 5 non-covalently bound subunits. Requires Ca(2+) as cofactor.

Its subcellular location is the secreted. In Bos taurus (Bovine), this protein is Mucosal pentraxin (MPTX).